A 260-amino-acid polypeptide reads, in one-letter code: Repetitive secreted protein 1 (260 aa).

The first 20 residues, 1 to 20, serve as a signal peptide directing secretion; it reads MKLSFTIVATAALVASCTFA.

In terms of processing, rsp1 is processed by the subtilisin-like endoprotease kex2. Cleavage by kex2 generates 11 peptides.

Its subcellular location is the secreted. Functionally, repetitive secreted protein essential for pathogenic development. Hum3 and rsp1 together are pathogenicity proteins that share an essential function in early stages of the infection. This Mycosarcoma maydis (Corn smut fungus) protein is Repetitive secreted protein 1.